Consider the following 87-residue polypeptide: Large ribosomal subunit protein bL27 (87 aa).

Positions 1-24 (MATKKAGGSSRNGRDSAGRRLGVK) are disordered.

The protein belongs to the bacterial ribosomal protein bL27 family.

This is Large ribosomal subunit protein bL27 from Rickettsia massiliae (strain Mtu5).